The primary structure comprises 129 residues: F(420)H(2) dehydrogenase subunit A (129 aa).

3 helical membrane-spanning segments follow: residues 9–29, 64–84, and 95–115; these read IIDS…MPPM, FNVE…EVLF, and HGIT…LLFG.

It belongs to the complex I subunit 3 family. The FPO complex is composed of at least 13 different subunits. FpoA, FpoH, FpoJ, FpoK, FpoL, FpoM and FpoN proteins constitute the membrane sector of the complex.

The protein localises to the cell membrane. It catalyses the reaction methanophenazine + reduced coenzyme F420-(gamma-L-Glu)(n) = dihydromethanophenazine + oxidized coenzyme F420-(gamma-L-Glu)(n) + H(+). In terms of biological role, component of the F(420)H(2) dehydrogenase (FPO complex) which is part of the energy-conserving F(420)H(2):heterodisulfide oxidoreductase system. The membrane-bound electron transfer system of the complex plays an important role in the metabolism of methylotrophic methanogens when the organisms grow on methanol or methylamines. Catalyzes the oxidation of methanophenazine to dihydromethanophenazine. It shuttles electrons from F(420)H(2), via FAD and iron-sulfur (Fe-S) centers, to methanophenazine (an electron carrier in the membrane). It couples the redox reaction to proton translocation (for every two electrons transferred, two hydrogen ions are translocated across the cytoplasmic membrane), and thus conserves the redox energy in a proton gradient. It also catalyzes the oxidation of F(420)H(2) with quinones such as 2,3-dimethyl-1,4-naphthoquinone, 2-methyl-1,4-naphthoquinone and tetramethyl-p-benzoquinone. In Methanosarcina mazei (strain ATCC BAA-159 / DSM 3647 / Goe1 / Go1 / JCM 11833 / OCM 88) (Methanosarcina frisia), this protein is F(420)H(2) dehydrogenase subunit A (fpoA).